Here is a 119-residue protein sequence, read N- to C-terminus: Holo-[acyl-carrier-protein] synthase (119 aa).

Mg(2+) is bound by residues D8 and E58.

The protein belongs to the P-Pant transferase superfamily. AcpS family. It depends on Mg(2+) as a cofactor.

It is found in the cytoplasm. It catalyses the reaction apo-[ACP] + CoA = holo-[ACP] + adenosine 3',5'-bisphosphate + H(+). In terms of biological role, transfers the 4'-phosphopantetheine moiety from coenzyme A to a Ser of acyl-carrier-protein. This is Holo-[acyl-carrier-protein] synthase from Bacillus cytotoxicus (strain DSM 22905 / CIP 110041 / 391-98 / NVH 391-98).